A 248-amino-acid polypeptide reads, in one-letter code: 3,4-dihydroxyphthalate decarboxylase (248 aa).

Glutamate 90 (proton donor/acceptor) is an active-site residue. 4 residues coordinate a divalent metal cation: glutamate 90, histidine 109, histidine 111, and histidine 177.

Belongs to the aldolase class II family. The cofactor is a divalent metal cation.

It carries out the reaction 3,4-dihydroxyphthalate + H(+) = 3,4-dihydroxybenzoate + CO2. The protein operates within xenobiotic degradation; phthalate degradation. In terms of biological role, catalyzes the decarboxylation of 3,4-dihydroxyphthalate to protocatechuate (3,4-dihydroxybenzoate) during phthalate metabolism. The protein is 3,4-dihydroxyphthalate decarboxylase of Arthrobacter keyseri.